The following is a 152-amino-acid chain: Large ribosomal subunit protein bL9 (152 aa).

Belongs to the bacterial ribosomal protein bL9 family.

Binds to the 23S rRNA. This Synechococcus sp. (strain CC9605) protein is Large ribosomal subunit protein bL9.